The chain runs to 486 residues: Probable glycine dehydrogenase (decarboxylating) subunit 2 (486 aa).

Position 269 is an N6-(pyridoxal phosphate)lysine (K269).

Belongs to the GcvP family. C-terminal subunit subfamily. The glycine cleavage system is composed of four proteins: P, T, L and H. In this organism, the P 'protein' is a heterodimer of two subunits. Requires pyridoxal 5'-phosphate as cofactor.

The enzyme catalyses N(6)-[(R)-lipoyl]-L-lysyl-[glycine-cleavage complex H protein] + glycine + H(+) = N(6)-[(R)-S(8)-aminomethyldihydrolipoyl]-L-lysyl-[glycine-cleavage complex H protein] + CO2. The glycine cleavage system catalyzes the degradation of glycine. The P protein binds the alpha-amino group of glycine through its pyridoxal phosphate cofactor; CO(2) is released and the remaining methylamine moiety is then transferred to the lipoamide cofactor of the H protein. This chain is Probable glycine dehydrogenase (decarboxylating) subunit 2, found in Chlorobaculum tepidum (strain ATCC 49652 / DSM 12025 / NBRC 103806 / TLS) (Chlorobium tepidum).